Consider the following 189-residue polypeptide: Orotate phosphoribosyltransferase (189 aa).

Residues Arg-99, Lys-100, Lys-103, His-105, and 126 to 134 (EDVITTGGS) each bind 5-phospho-alpha-D-ribose 1-diphosphate. Orotate is bound by residues Thr-130 and Arg-158.

Belongs to the purine/pyrimidine phosphoribosyltransferase family. PyrE subfamily. In terms of assembly, homodimer. It depends on Mg(2+) as a cofactor.

It carries out the reaction orotidine 5'-phosphate + diphosphate = orotate + 5-phospho-alpha-D-ribose 1-diphosphate. Its pathway is pyrimidine metabolism; UMP biosynthesis via de novo pathway; UMP from orotate: step 1/2. Its function is as follows. Catalyzes the transfer of a ribosyl phosphate group from 5-phosphoribose 1-diphosphate to orotate, leading to the formation of orotidine monophosphate (OMP). The chain is Orotate phosphoribosyltransferase from Thermosynechococcus vestitus (strain NIES-2133 / IAM M-273 / BP-1).